Reading from the N-terminus, the 275-residue chain is Large ribosomal subunit protein uL2 (275 aa).

Disordered stretches follow at residues Glu-35–Gly-55 and Val-223–Asn-260. The segment covering Arg-39 to Val-49 has biased composition (polar residues).

This sequence belongs to the universal ribosomal protein uL2 family. In terms of assembly, part of the 50S ribosomal subunit. Forms a bridge to the 30S subunit in the 70S ribosome.

Its function is as follows. One of the primary rRNA binding proteins. Required for association of the 30S and 50S subunits to form the 70S ribosome, for tRNA binding and peptide bond formation. It has been suggested to have peptidyltransferase activity; this is somewhat controversial. Makes several contacts with the 16S rRNA in the 70S ribosome. This is Large ribosomal subunit protein uL2 from Methylococcus capsulatus (strain ATCC 33009 / NCIMB 11132 / Bath).